The chain runs to 341 residues: UDP-3-O-acylglucosamine N-acyltransferase (341 aa).

Catalysis depends on H241, which acts as the Proton acceptor.

The protein belongs to the transferase hexapeptide repeat family. LpxD subfamily. In terms of assembly, homotrimer.

The enzyme catalyses a UDP-3-O-[(3R)-3-hydroxyacyl]-alpha-D-glucosamine + a (3R)-hydroxyacyl-[ACP] = a UDP-2-N,3-O-bis[(3R)-3-hydroxyacyl]-alpha-D-glucosamine + holo-[ACP] + H(+). It participates in bacterial outer membrane biogenesis; LPS lipid A biosynthesis. Functionally, catalyzes the N-acylation of UDP-3-O-acylglucosamine using 3-hydroxyacyl-ACP as the acyl donor. Is involved in the biosynthesis of lipid A, a phosphorylated glycolipid that anchors the lipopolysaccharide to the outer membrane of the cell. This is UDP-3-O-acylglucosamine N-acyltransferase from Christiangramia forsetii (strain DSM 17595 / CGMCC 1.15422 / KT0803) (Gramella forsetii).